Reading from the N-terminus, the 477-residue chain is Glycogen synthase (477 aa).

K15 contributes to the ADP-alpha-D-glucose binding site.

This sequence belongs to the glycosyltransferase 1 family. Bacterial/plant glycogen synthase subfamily.

It catalyses the reaction [(1-&gt;4)-alpha-D-glucosyl](n) + ADP-alpha-D-glucose = [(1-&gt;4)-alpha-D-glucosyl](n+1) + ADP + H(+). It functions in the pathway glycan biosynthesis; glycogen biosynthesis. Functionally, synthesizes alpha-1,4-glucan chains using ADP-glucose. The polypeptide is Glycogen synthase (Streptococcus pneumoniae (strain JJA)).